A 202-amino-acid chain; its full sequence is Dephospho-CoA kinase (202 aa).

Residues 6–202 (KVSITGDLSS…EYFYALKGAL (197 aa)) form the DPCK domain. 14-19 (SSGKTE) provides a ligand contact to ATP.

Belongs to the CoaE family.

It is found in the cytoplasm. It catalyses the reaction 3'-dephospho-CoA + ATP = ADP + CoA + H(+). The protein operates within cofactor biosynthesis; coenzyme A biosynthesis; CoA from (R)-pantothenate: step 5/5. Its function is as follows. Catalyzes the phosphorylation of the 3'-hydroxyl group of dephosphocoenzyme A to form coenzyme A. The chain is Dephospho-CoA kinase from Chlamydia felis (strain Fe/C-56) (Chlamydophila felis).